Reading from the N-terminus, the 680-residue chain is Leucine-rich repeat and calponin homology domain-containing protein 4 (680 aa).

Residues 1 to 22 (MAAAVAGPLAAGGEEAAASVSL) are compositionally biased toward low complexity. Positions 1–35 (MAAAVAGPLAAGGEEAAASVSLPGSPGLPGSRSAE) are disordered. LRR repeat units follow at residues 41–64 (AVAT…AARS), 67–90 (LSDI…ACQL), 92–113 (SLEG…LGNL), 114–136 (TALT…ICQL), 138–158 (LRVL…ISTL), 159–181 (GSLR…LCSL), 182–204 (RSLR…LGDL), 206–226 (LVRL…FCRL), and 227–250 (RHLQ…CLKG). Ser279, Ser281, Ser304, Ser307, Ser309, and Ser313 each carry phosphoserine. Residues 329–528 (SELARDPRGP…PSSPESVLRP (200 aa)) form a disordered region. The segment covering 330 to 345 (ELARDPRGPRQPREDG) has biased composition (basic and acidic residues). Positions 346-355 (AGDGDLEQID) are enriched in acidic residues. Basic and acidic residues-rich tracts occupy residues 357-371 (IDSH…RSAA) and 385-418 (DVEK…ERKQ). Ser432 is modified (phosphoserine). Low complexity-rich tracts occupy residues 440–453 (AAGA…TQAT) and 510–528 (RSSS…VLRP). Residues Ser511, Ser513, Ser517, Ser521, and Ser586 each carry the phosphoserine modification. One can recognise a Calponin-homology (CH) domain in the interval 531 to 644 (FPQEKELISQ…VLEAVILVGG (114 aa)). The helical transmembrane segment at 655–675 (GLGGFLLFYVVFMLLLYVVYT) threads the bilayer.

In terms of tissue distribution, widely expressed across tissues, with the most abundant expression in spleen, testes, thymus, intestine, and blood. Expressed in macrophages.

The protein resides in the cell membrane. Functionally, accessory protein that regulates signaling by multiple TLRs, acting as a broad-spanning regulator of the innate immune response. In macrophages, binds LPS and promotes proper docking of LPS in lipid raft membrane. May be required for lipid raft maintenance. The polypeptide is Leucine-rich repeat and calponin homology domain-containing protein 4 (Lrch4) (Mus musculus (Mouse)).